The following is a 37-amino-acid chain: Toxin Bcg III 28.78 (37 aa).

A disulfide bond links cysteine 6 and cysteine 31.

It localises to the secreted. The protein localises to the nematocyst. This is Toxin Bcg III 28.78 from Bunodosoma cangicum (Sea anemone).